Consider the following 258-residue polypeptide: MEMDSHNAKPLRILLSNDDGVHAQGIHALADELRSIAEVTIVAPDRNRSGASNSLTLEQPLRVTEIAPKTFSVQGTPTDCVHFALNELMKDDLPDLVLSGINHGANLGDDVLYSGTVAAAMEGHFLGVQAIAFSLVGKQHFESAAKIARQLVEQHLIRPIPTNRLLNVNVPDLPFEELGEIEVTRLGARHHAENMIKQRDPRGHDIYWLGPPGKEQDAGIGTDFYAIEHGFVSITPLQVDLTAHESLRAMDSWLKEEN.

Aspartate 18, aspartate 19, serine 49, and asparagine 102 together coordinate a divalent metal cation.

It belongs to the SurE nucleotidase family. The cofactor is a divalent metal cation.

It localises to the cytoplasm. The enzyme catalyses a ribonucleoside 5'-phosphate + H2O = a ribonucleoside + phosphate. In terms of biological role, nucleotidase that shows phosphatase activity on nucleoside 5'-monophosphates. The sequence is that of 5'-nucleotidase SurE from Vibrio campbellii (strain ATCC BAA-1116).